The following is a 451-amino-acid chain: D(1A) dopamine receptor (451 aa).

The Extracellular segment spans residues 1 to 22 (MTFNITSMDEDVLLTERESSFR). Asn4 carries an N-linked (GlcNAc...) asparagine glycan. A helical transmembrane segment spans residues 23–48 (VLTGCFLSVLILSTLLGNTLVCAAVI). Residues 49 to 59 (RFRHLRSKVTN) lie on the Cytoplasmic side of the membrane. The chain crosses the membrane as a helical span at residues 60 to 86 (FFVISLAVSDLLVAVLVMPWKAVAEIA). At 87–95 (GFWPFGTFC) the chain is on the extracellular side. A disulfide bridge connects residues Cys95 and Cys185. The chain crosses the membrane as a helical span at residues 96–118 (NIWVAFDIMCSTASILNLCVISV). Residues 119–137 (DRYWAISSPFRYERKMTPK) are Cytoplasmic-facing. Residues 138–162 (VAFIMIGVAWTLSVLISFIPVQLNW) form a helical membrane-spanning segment. The Extracellular portion of the chain corresponds to 163–191 (HKAKTTSFFDLNITLHDRTMDNCDSSLNR). The helical transmembrane segment at 192–217 (TYAISSSLISFYIPVAIMIVTYTRIY) threads the bilayer. Residues 218-271 (RIAAKQIRRISALERAAVHAKNCQNSTSNRNSLDCQQPESSLKTSFKRETKVLK) lie on the Cytoplasmic side of the membrane. Residues 272–298 (TLSVIMGVFVCCWLPFFILNCIVPFCD) form a helical membrane-spanning segment. Over 299–315 (PSLTTSGTEPFCISSTT) the chain is Extracellular. The chain crosses the membrane as a helical span at residues 316-340 (FDVFVWFGWANSSLNPIIYAFNADF). Topologically, residues 341–451 (RKAFSNLLGC…PITQNGQPKT (111 aa)) are cytoplasmic. Cys350 is lipidated: S-palmitoyl cysteine.

The protein belongs to the G-protein coupled receptor 1 family. In terms of tissue distribution, brain.

The protein localises to the cell membrane. It is found in the cell projection. The protein resides in the cilium membrane. Dopamine receptor whose activity is mediated by G proteins which activate adenylyl cyclase. The chain is D(1A) dopamine receptor (drd1) from Xenopus laevis (African clawed frog).